Consider the following 225-residue polypeptide: Small ribosomal subunit protein uS3 (225 aa).

One can recognise a KH type-2 domain in the interval 38-106 (LRAHLRRKLS…DVALNIVEIR (69 aa)).

Belongs to the universal ribosomal protein uS3 family. In terms of assembly, part of the 30S ribosomal subunit. Forms a tight complex with proteins S10 and S14.

In terms of biological role, binds the lower part of the 30S subunit head. Binds mRNA in the 70S ribosome, positioning it for translation. This is Small ribosomal subunit protein uS3 from Gluconacetobacter diazotrophicus (strain ATCC 49037 / DSM 5601 / CCUG 37298 / CIP 103539 / LMG 7603 / PAl5).